Consider the following 245-residue polypeptide: 1-(5-phosphoribosyl)-5-[(5-phosphoribosylamino)methylideneamino] imidazole-4-carboxamide isomerase (245 aa).

Residue aspartate 7 is the Proton acceptor of the active site. Aspartate 129 serves as the catalytic Proton donor.

This sequence belongs to the HisA/HisF family.

The protein resides in the cytoplasm. The catalysed reaction is 1-(5-phospho-beta-D-ribosyl)-5-[(5-phospho-beta-D-ribosylamino)methylideneamino]imidazole-4-carboxamide = 5-[(5-phospho-1-deoxy-D-ribulos-1-ylimino)methylamino]-1-(5-phospho-beta-D-ribosyl)imidazole-4-carboxamide. It functions in the pathway amino-acid biosynthesis; L-histidine biosynthesis; L-histidine from 5-phospho-alpha-D-ribose 1-diphosphate: step 4/9. This Idiomarina loihiensis (strain ATCC BAA-735 / DSM 15497 / L2-TR) protein is 1-(5-phosphoribosyl)-5-[(5-phosphoribosylamino)methylideneamino] imidazole-4-carboxamide isomerase.